The following is a 93-amino-acid chain: MDGIKYAVFTDKGVRLLGKNQYTSNVESGSTRTEIKHWVELFFGVKVQAMNSHRLPGKGRRMGPIMGHTMHYRRMIITLQPGYSIPPLRKKRT.

Belongs to the universal ribosomal protein uL23 family. As to quaternary structure, part of the 50S ribosomal subunit.

The protein resides in the plastid. It is found in the chloroplast. Its function is as follows. Binds to 23S rRNA. The chain is Large ribosomal subunit protein uL23cz/uL23cy (rpl23-A) from Oenothera elata subsp. hookeri (Hooker's evening primrose).